Consider the following 881-residue polypeptide: Ent-kaurene synthase CPS/KS, chloroplastic (881 aa).

The N-terminal 41 residues, 1–41 (MASSTLIQNRSCGVTSSMSSFQIFRGQPLRFPGTRTPAAVQ), are a transit peptide targeting the chloroplast. Mg(2+)-binding residues include Asp417, Asp419, Asp635, Asp639, Asn778, Asp779, and Glu786. Positions 417 to 422 (DVDDTA) match the DXDDTA motif motif. The short motif at 635-639 (DDYFD) is the DDXXD motif element.

Belongs to the terpene synthase family. Mg(2+) serves as cofactor.

The protein localises to the plastid. The protein resides in the chloroplast. It carries out the reaction (2E,6E,10E)-geranylgeranyl diphosphate = ent-copalyl diphosphate. The catalysed reaction is ent-copalyl diphosphate = ent-kaur-16-ene + diphosphate. It catalyses the reaction ent-copalyl diphosphate = ent-beyerene + diphosphate. The enzyme catalyses ent-copalyl diphosphate = ent-sandaracopimara-8(14),15-diene + diphosphate. It carries out the reaction ent-copalyl diphosphate = ent-isokaurene + diphosphate. The catalysed reaction is ent-copalyl diphosphate + H2O = 16alpha-hydroxy-ent-kaurene + diphosphate. It functions in the pathway secondary metabolite biosynthesis; terpenoid biosynthesis. Its function is as follows. Bifunctional copalyl diphosphate/kaurene synthase involved in the biosynthesis of labdane-related diterpenoids (LRDs) natural products such as ent-beyerene, an antimicrobial compound. Supports the conversion of geranylgeranyl diphosphate (GGPP) to ent-copalyl diphosphate (ent-CDP). Also catalyzes the subsequent cyclization of ent-CDP into many diterpenes, including ent-kaur-16-ene as the major product, and ent-beyerene, ent-sandaracopimaradiene, ent-kaur-15-ene (ent-isokaurene) and 16-hydroxy-ent-kaurene (ent-16-alpha-hydroxy-kaurene) as minor products. The polypeptide is Ent-kaurene synthase CPS/KS, chloroplastic (Physcomitrium patens (Spreading-leaved earth moss)).